Consider the following 26-residue polypeptide: Delta-hemolysin (26 aa).

Met1 is modified (N-formylmethionine).

This sequence belongs to the delta-lysin family.

It localises to the secreted. It is found in the host cell membrane. In terms of biological role, lyses erythrocytes and many other mammalian cells. This Staphylococcus aureus (strain Mu50 / ATCC 700699) protein is Delta-hemolysin (hld).